Here is a 138-residue protein sequence, read N- to C-terminus: Molluscan insulin-related peptide 5 (138 aa).

The first 31 residues, 1–31 (MAGVRLVFTKAFMVTVLLTLLLNIGVKPAEG), serve as a signal peptide directing secretion. Gln-32 is subject to Pyrrolidone carboxylic acid. Disulfide bonds link Cys-48/Cys-124, Cys-60/Cys-137, and Cys-123/Cys-128. Residues 72-84 (DAETGWLLPETMV) constitute a propeptide, C-beta peptide like. Positions 87–111 (NAQTDLDDPLRNIKLSSESALTYLT) are cleaved as a propeptide — C-alpha peptide like. The residue at position 114 (Gln-114) is a Pyrrolidone carboxylic acid.

Belongs to the insulin family. In terms of assembly, heterodimer of a B chain and an A chain linked by two disulfide bonds. As to expression, expressed in the cerebral light-green cells which are giant neuroendocrines cells involved in the control of growth.

The protein localises to the cytoplasmic vesicle. Its subcellular location is the secretory vesicle. The chain is Molluscan insulin-related peptide 5 from Lymnaea stagnalis (Great pond snail).